We begin with the raw amino-acid sequence, 260 residues long: MFKNKDSVGGTLLVIILLSLACSIIVAGSAVLLKPTQIEQKELDKQKNILSVAGLLQPTTKNSEIKTIYANNIEARLVDLNTGDFAPAQPGFDAAKAVKNPAESTALSAEDDVAGIRVRANFAEVYLVKNDAGQVTQVVLPFYGKGLWSMMYGFMSVQPDGNTVNGITYYDQGETPGLGGEIENPKWQAQFPGKKLYTADNQVGLYVGKGASANAEHGIDAISGSTLTSNGVNNSFKFWLGQKGFGPFLAKLKAGVLNNG.

The chain crosses the membrane as a helical span at residues 12-32 (LLVIILLSLACSIIVAGSAVL). An FMN phosphoryl threonine modification is found at Thr-226.

This sequence belongs to the NqrC family. Composed of six subunits; NqrA, NqrB, NqrC, NqrD, NqrE and NqrF. It depends on FMN as a cofactor.

Its subcellular location is the cell inner membrane. It catalyses the reaction a ubiquinone + n Na(+)(in) + NADH + H(+) = a ubiquinol + n Na(+)(out) + NAD(+). In terms of biological role, NQR complex catalyzes the reduction of ubiquinone-1 to ubiquinol by two successive reactions, coupled with the transport of Na(+) ions from the cytoplasm to the periplasm. NqrA to NqrE are probably involved in the second step, the conversion of ubisemiquinone to ubiquinol. The protein is Na(+)-translocating NADH-quinone reductase subunit C of Pasteurella multocida (strain Pm70).